Consider the following 329-residue polypeptide: MVKTQRVVITPGEPAGIGPDLIVQLAQREWPVELVVCADATLLTDRAAMLGLPLTLRPYSPNSPAQPQTAGTLTLLPVVLRESVTAGQLAVENGHYVVETLARACDGCLNGEFAALITGPVHKGVINDAGIPFTGHTEFFEERSQAKKVVMMLATEELRVALATTHLPLRDIADAITPALLHEVIAILHHDLRTKFGIAEPRILVCGLNPHAGEGGHMGTEEIDTIIPVLNELREQGMKLNGPLPADTLFQPKYLDNADAVLAMYHDQGLPVLKYQGFGRGVNITLGLPFIRTSVDHGTALELAGRGKADVGSFITALNLAIKMIVNTQ.

Residues His136 and Thr137 each contribute to the substrate site. Positions 166, 211, and 266 each coordinate a divalent metal cation. Substrate is bound by residues Lys274, Asn283, and Arg292.

It belongs to the PdxA family. As to quaternary structure, homodimer. Requires Zn(2+) as cofactor. Mg(2+) serves as cofactor. It depends on Co(2+) as a cofactor.

It is found in the cytoplasm. It carries out the reaction 4-(phosphooxy)-L-threonine + NAD(+) = 3-amino-2-oxopropyl phosphate + CO2 + NADH. It functions in the pathway cofactor biosynthesis; pyridoxine 5'-phosphate biosynthesis; pyridoxine 5'-phosphate from D-erythrose 4-phosphate: step 4/5. Functionally, catalyzes the NAD(P)-dependent oxidation of 4-(phosphooxy)-L-threonine (HTP) into 2-amino-3-oxo-4-(phosphooxy)butyric acid which spontaneously decarboxylates to form 3-amino-2-oxopropyl phosphate (AHAP). The chain is 4-hydroxythreonine-4-phosphate dehydrogenase from Escherichia coli O81 (strain ED1a).